Reading from the N-terminus, the 314-residue chain is MIOREX complex component 8 (314 aa).

One can recognise an EngB-type G domain in the interval 132–312 (TLPEVIFLGG…RYVIFQSCGL (181 aa)). GTP-binding positions include 140–147 (GGTNVGKS), 173–177 (GFTKT), 191–194 (DSPG), 253–256 (TKMD), and 290–292 (SST). The Mg(2+) site is built by Ser-147 and Thr-175.

This sequence belongs to the TRAFAC class TrmE-Era-EngA-EngB-Septin-like GTPase superfamily. EngB GTPase family. In terms of assembly, associates with the mitochondrial ribosome. It depends on Mg(2+) as a cofactor. In terms of processing, sumoylated upon ethanol stress.

Its subcellular location is the mitochondrion. Component of MIOREX complexes, large expressome-like assemblies of ribosomes with factors involved in all the steps of post-transcriptional gene expression. In Saccharomyces cerevisiae (strain ATCC 204508 / S288c) (Baker's yeast), this protein is MIOREX complex component 8.